We begin with the raw amino-acid sequence, 316 residues long: Phosphatidylinositol mannoside acyltransferase (316 aa).

Residue His137 is the Proton acceptor of the active site. The hexadecanoyl-CoA site is built by His137 and Arg175. Glu211 is a catalytic residue. Glu240 is a hexadecanoyl-CoA binding site.

The protein belongs to the LpxL/LpxM/LpxP family.

The protein localises to the cell inner membrane. It carries out the reaction a 2,6-O-bis(alpha-D-mannopyranosyl)-1-phosphatidyl-1D-myo-inositol + an acyl-CoA = a 2-O-(alpha-D-mannosyl)-6-O-(6-O-acyl-alpha-D-mannosyl)-1-phosphatidyl-1D-myo-inositol + CoA. The catalysed reaction is a 1,2-diacyl-sn-glycero-3-phospho-[alpha-D-mannopyranosyl-(1&lt;-&gt;6)-D-myo-inositol] + an acyl-CoA = a 1,2-diacyl-sn-glycero-3-phospho-[alpha-D-6-acyl-mannopyranosyl-(1&lt;-&gt;6)-D-myo-inositol] + CoA. Its pathway is phospholipid metabolism; phosphatidylinositol metabolism. Catalyzes the transfer of a palmitoyl moiety from palmitoyl-CoA to the 6-position of the mannose ring linked to the 2-position of myo-inositol in phosphatidyl-myo-inositol monomannoside (PIM1) or dimannoside (PIM2). In Mycobacterium tuberculosis (strain CDC 1551 / Oshkosh), this protein is Phosphatidylinositol mannoside acyltransferase.